Reading from the N-terminus, the 379-residue chain is Diaminopimelate decarboxylase (379 aa).

Lys48 carries the N6-(pyridoxal phosphate)lysine modification. Pyridoxal 5'-phosphate is bound by residues Gly214 and 242-245 (EPGR). Substrate is bound by residues Arg245, Arg280, and Tyr284. The active-site Proton donor is Cys309. Substrate-binding residues include Glu310 and Tyr338. Position 338 (Tyr338) interacts with pyridoxal 5'-phosphate.

Belongs to the Orn/Lys/Arg decarboxylase class-II family. LysA subfamily. Homodimer. Requires pyridoxal 5'-phosphate as cofactor.

The enzyme catalyses meso-2,6-diaminopimelate + H(+) = L-lysine + CO2. Its pathway is amino-acid biosynthesis; L-lysine biosynthesis via DAP pathway; L-lysine from DL-2,6-diaminopimelate: step 1/1. Specifically catalyzes the decarboxylation of meso-diaminopimelate (meso-DAP) to L-lysine. This is Diaminopimelate decarboxylase from Deinococcus radiodurans (strain ATCC 13939 / DSM 20539 / JCM 16871 / CCUG 27074 / LMG 4051 / NBRC 15346 / NCIMB 9279 / VKM B-1422 / R1).